The following is a 208-amino-acid chain: Large ribosomal subunit protein bL9 (208 aa).

Residues 161–208 (KKRKIEKEVEEGSGTSVDESLKLDSVSDSIDTSGVNSSDKEEENNIIE) form a disordered region. Over residues 186-197 (VSDSIDTSGVNS) the composition is skewed to polar residues.

It belongs to the bacterial ribosomal protein bL9 family.

In terms of biological role, binds to the 23S rRNA. The polypeptide is Large ribosomal subunit protein bL9 (Ehrlichia canis (strain Jake)).